The primary structure comprises 923 residues: Transportin-3 (923 aa).

Methionine 1 bears the N-acetylmethionine mark. A Phosphoserine modification is found at serine 74. Phosphothreonine occurs at positions 242 and 896.

Interacts with (GTP-bound) Ran. Interacts with (phosphorylated) SFRS1 and SFRS2; leading to their nuclear import. Interacts with NUP62. Interacts with RBM4. Interacts with CPSF6, promoting its nuclear import.

The protein resides in the nucleus envelope. Its subcellular location is the cytoplasm. Importin, which transports target proteins into the nucleus. Specifically mediates the nuclear import of splicing factor serine/arginine (SR) proteins, such as RBM4, SFRS1 and SFRS2, by recognizing phosphorylated SR domains. Also mediates the nuclear import of serine/arginine (SR) protein CPSF6, independently of CPSF6 phosphorylation. The nuclear import process is regulated by the small GTPase Ran that partitions between cytoplasm and nucleus in the predominantly GDP- and GTP-bound form, respectively. Importin associates with target cargo proteins in the cytoplasm, and the competitive binding of GTP-bound Ran induces the release of cargos in the nucleus. This Mus musculus (Mouse) protein is Transportin-3.